The primary structure comprises 477 residues: Membrane-bound lytic murein transglycosylase F (477 aa).

A signal peptide spans 1–22 (MTRFLLIIILGFLLTACQQVTV). Residues 23-257 (DEPEFVPHQL…HLNEKYFGHV (235 aa)) form a non-LT domain region. The LT domain stretch occupies residues 258-477 (KRFDYIDTRA…AGSLSPDQPK (220 aa)). E302 is an active-site residue. A disordered region spans residues 446–477 (SKQPMPEDEQNDLIAEELPSMPAGSLSPDQPK). Acidic residues predominate over residues 451–460 (PEDEQNDLIA).

It in the N-terminal section; belongs to the bacterial solute-binding protein 3 family. This sequence in the C-terminal section; belongs to the transglycosylase Slt family.

The protein resides in the cell outer membrane. The enzyme catalyses Exolytic cleavage of the (1-&gt;4)-beta-glycosidic linkage between N-acetylmuramic acid (MurNAc) and N-acetylglucosamine (GlcNAc) residues in peptidoglycan, from either the reducing or the non-reducing ends of the peptidoglycan chains, with concomitant formation of a 1,6-anhydrobond in the MurNAc residue.. Functionally, murein-degrading enzyme that degrades murein glycan strands and insoluble, high-molecular weight murein sacculi, with the concomitant formation of a 1,6-anhydromuramoyl product. Lytic transglycosylases (LTs) play an integral role in the metabolism of the peptidoglycan (PG) sacculus. Their lytic action creates space within the PG sacculus to allow for its expansion as well as for the insertion of various structures such as secretion systems and flagella. In Shewanella sp. (strain W3-18-1), this protein is Membrane-bound lytic murein transglycosylase F.